The following is a 241-amino-acid chain: Thyroid transcription factor 1-associated protein 26 (241 aa).

Disordered regions lie at residues 1–22 and 182–205; these read MAPV…GEGV and KRAA…RQYK. The segment covering 186-202 has biased composition (basic and acidic residues); it reads KKQEFERRKQEREEAQR.

Belongs to the TAP26 family. As to quaternary structure, interacts with NKX2-1. Ubiquitously expressed. In lung, expression is restricted to the alveolar epithelial cells.

It localises to the nucleus. Its function is as follows. Component of the transcription complexes of the pulmonary surfactant-associated protein-B (SFTPB) and -C (SFTPC). Enhances homeobox protein Nkx-2.1-activated SFTPB and SFTPC promoter activities. The protein is Thyroid transcription factor 1-associated protein 26 (CCDC59) of Homo sapiens (Human).